Consider the following 521-residue polypeptide: Ribonuclease Y 1 (521 aa).

The chain crosses the membrane as a helical span at residues 1–21 (MEIVISAIIGLLIGGTVVFVI). Positions 51–87 (IKKESENKAKDFESRARKNVEQDIHKQKSTLKNKESQ) are disordered. The 61-residue stretch at 211-271 (TVSVLALPND…VRRELARRTI (61 aa)) folds into the KH domain. Positions 337–430 (ALNQSLEVAT…VHAAYTLSSS (94 aa)) constitute an HD domain.

Belongs to the RNase Y family.

It is found in the cell membrane. Functionally, endoribonuclease that initiates mRNA decay. The chain is Ribonuclease Y 1 from Bdellovibrio bacteriovorus (strain ATCC 15356 / DSM 50701 / NCIMB 9529 / HD100).